The sequence spans 423 residues: Gamma-glutamyl phosphate reductase (423 aa).

Belongs to the gamma-glutamyl phosphate reductase family.

The protein resides in the cytoplasm. It carries out the reaction L-glutamate 5-semialdehyde + phosphate + NADP(+) = L-glutamyl 5-phosphate + NADPH + H(+). The protein operates within amino-acid biosynthesis; L-proline biosynthesis; L-glutamate 5-semialdehyde from L-glutamate: step 2/2. In terms of biological role, catalyzes the NADPH-dependent reduction of L-glutamate 5-phosphate into L-glutamate 5-semialdehyde and phosphate. The product spontaneously undergoes cyclization to form 1-pyrroline-5-carboxylate. The polypeptide is Gamma-glutamyl phosphate reductase (Burkholderia orbicola (strain AU 1054)).